Reading from the N-terminus, the 215-residue chain is UPF0502 protein YceH (215 aa).

Lys80 bears the N6-acetyllysine mark.

The protein belongs to the UPF0502 family.

The chain is UPF0502 protein YceH from Shigella boydii serotype 18 (strain CDC 3083-94 / BS512).